A 955-amino-acid polypeptide reads, in one-letter code: Glutamyl aminopeptidase (955 aa).

The Cytoplasmic portion of the chain corresponds to 1–17; that stretch reads MDIEDKTSKMHCMKGKH. A helical; Signal-anchor for type II membrane protein membrane pass occupies residues 18–38; it reads VVIICGVVIAVGLILGLGLGL. Residues 39 to 955 lie on the Extracellular side of the membrane; the sequence is GLDTKACNPP…LENSEHSNFA (917 aa). Asn-118 and Asn-192 each carry an N-linked (GlcNAc...) asparagine glycan. Glu-218 is a binding site for substrate. 2 N-linked (GlcNAc...) asparagine glycosylation sites follow: Asn-319 and Asn-335. 352-356 is a substrate binding site; the sequence is GAMEN. Position 388 (His-388) interacts with Zn(2+). Residue Glu-389 is the Proton acceptor of the active site. His-392 and Glu-411 together coordinate Zn(2+). 8 N-linked (GlcNAc...) asparagine glycosylation sites follow: Asn-458, Asn-547, Asn-584, Asn-592, Asn-674, Asn-759, Asn-823, and Asn-836. Substrate is bound at residue Arg-882.

It belongs to the peptidase M1 family. In terms of assembly, homodimer; disulfide-linked. Zn(2+) is required as a cofactor. N-glycosylated. Glycosylation counts for an increased mass of about 32% of the protein mass (about 48 kDa).

The protein localises to the cell membrane. The enzyme catalyses Release of N-terminal glutamate (and to a lesser extent aspartate) from a peptide.. With respect to regulation, substrate specificity is modulated by calcium which enhances the enzymatic activity for cleavage of acidic residues while reducing its activity with neutral and basic residues. Hydrolytic activity is inhibited by the aminopeptidase inhibitor (Leu and acidic inhibitor) amastatin, but not by bestatin (aminopeptidase inhibitor Leu inhibitor), leupeptin, pepstatin A and PMSF. Its hydrolytic activity is also strongly reduced by zinc ions, with a complete inhibition at 0.5 mM, and moderately inhibited by cobalt and copper ions. Its function is as follows. Venom protein that cleaves N-terminal acidic residues from peptides with high potency in presence of calcium. It may have several roles in venom including alteration of blood pressure by cleaving circulating angiotensin-2, general degradation of host tissue, increase of permeability to other venom components, and/or processing of other toxins in the venom. The protein is Glutamyl aminopeptidase of Bitis rhinoceros (West African gaboon viper).